The following is a 193-amino-acid chain: Probable 3' cyclic ADP-D-ribose synthase ThsB' (193 aa).

As to quaternary structure, homodimer.

It catalyses the reaction NAD(+) = 3'cADPR + nicotinamide + H(+). In terms of biological role, TIR-like domain-containing component of the Thoeris antiviral defense system, composed of ThsA and ThsB and ThsB'. In the presence of NAD(+) produces a signaling molecule that activates cognate ThsA (AC J8G6Z1) to hydrolyze NAD(+). The signaling molecule is a cyclic ADP-D-ribose isomer and may be 3' cyclic ADP-D-ribose (3'cADPR); it is not 2'cADPR. The polypeptide is Probable 3' cyclic ADP-D-ribose synthase ThsB' (Bacillus cereus (strain MSX-D12)).